The primary structure comprises 263 residues: Small ribosomal subunit protein eS4 (263 aa).

Residues 42–104 form the S4 RNA-binding domain; it reads LPLIIFLRNR…TGENFRLIYD (63 aa).

The protein belongs to the eukaryotic ribosomal protein eS4 family.

In Ictalurus punctatus (Channel catfish), this protein is Small ribosomal subunit protein eS4 (rps4).